A 122-amino-acid chain; its full sequence is Small ribosomal subunit protein uS13 (122 aa).

The disordered stretch occupies residues 94-122; that stretch reads LSLPVRGQRTKTNSRTRKGKRKTVAGKKK. Residues 101-122 show a composition bias toward basic residues; sequence QRTKTNSRTRKGKRKTVAGKKK.

The protein belongs to the universal ribosomal protein uS13 family. Part of the 30S ribosomal subunit. Forms a loose heterodimer with protein S19. Forms two bridges to the 50S subunit in the 70S ribosome.

Its function is as follows. Located at the top of the head of the 30S subunit, it contacts several helices of the 16S rRNA. In the 70S ribosome it contacts the 23S rRNA (bridge B1a) and protein L5 of the 50S subunit (bridge B1b), connecting the 2 subunits; these bridges are implicated in subunit movement. Contacts the tRNAs in the A and P-sites. This is Small ribosomal subunit protein uS13 from Chlamydia muridarum (strain MoPn / Nigg).